A 453-amino-acid chain; its full sequence is C4-dicarboxylate TRAP transporter large permease protein DctM (453 aa).

The next 13 helical transmembrane spans lie at 2–22 (AVAL…PIAI), 50–70 (AFAG…STFM), 82–102 (FAIA…VVAC), 104–124 (MFAA…SIVI), 139–159 (GVIC…VMVV), 172–192 (FLGG…AIYI), 217–237 (ASWG…GIFT), 243–263 (AVAA…MGPF), 289–309 (LYDA…ALIL), 326–346 (MLSA…ILLV), 356–376 (LLVI…IDPI), 380–400 (IMMV…LNLF), and 417–437 (ALPW…VPWV).

It belongs to the TRAP transporter large permease family. The complex comprises the extracytoplasmic solute receptor protein DctP, and the two transmembrane proteins DctQ and DctM.

It localises to the cell inner membrane. Its function is as follows. Part of the tripartite ATP-independent periplasmic (TRAP) transport system DctPQM involved in C4-dicarboxylates uptake. This is C4-dicarboxylate TRAP transporter large permease protein DctM from Vibrio cholerae serotype O1 (strain ATCC 39315 / El Tor Inaba N16961).